Here is a 319-residue protein sequence, read N- to C-terminus: tRNA-cytidine(32) 2-sulfurtransferase (319 aa).

The short motif at 43 to 48 (SGGKDS) is the PP-loop motif element. [4Fe-4S] cluster is bound by residues cysteine 118, cysteine 121, and cysteine 209. Positions 272 to 297 (DLAFDSEKMPERFSDGSEEDESEIKI) are disordered. Over residues 276–286 (DSEKMPERFSD) the composition is skewed to basic and acidic residues.

This sequence belongs to the TtcA family. As to quaternary structure, homodimer. Mg(2+) serves as cofactor. It depends on [4Fe-4S] cluster as a cofactor.

The protein resides in the cytoplasm. The catalysed reaction is cytidine(32) in tRNA + S-sulfanyl-L-cysteinyl-[cysteine desulfurase] + AH2 + ATP = 2-thiocytidine(32) in tRNA + L-cysteinyl-[cysteine desulfurase] + A + AMP + diphosphate + H(+). Its pathway is tRNA modification. In terms of biological role, catalyzes the ATP-dependent 2-thiolation of cytidine in position 32 of tRNA, to form 2-thiocytidine (s(2)C32). The sulfur atoms are provided by the cysteine/cysteine desulfurase (IscS) system. The protein is tRNA-cytidine(32) 2-sulfurtransferase of Neisseria gonorrhoeae (strain ATCC 700825 / FA 1090).